The chain runs to 479 residues: ATP synthase subunit beta (479 aa).

Residue Gly-168 to Thr-175 participates in ATP binding.

This sequence belongs to the ATPase alpha/beta chains family. As to quaternary structure, F-type ATPases have 2 components, CF(1) - the catalytic core - and CF(0) - the membrane proton channel. CF(1) has five subunits: alpha(3), beta(3), gamma(1), delta(1), epsilon(1). CF(0) has three main subunits: a(1), b(2) and c(9-12). The alpha and beta chains form an alternating ring which encloses part of the gamma chain. CF(1) is attached to CF(0) by a central stalk formed by the gamma and epsilon chains, while a peripheral stalk is formed by the delta and b chains.

It is found in the cell membrane. It catalyses the reaction ATP + H2O + 4 H(+)(in) = ADP + phosphate + 5 H(+)(out). Functionally, produces ATP from ADP in the presence of a proton gradient across the membrane. The catalytic sites are hosted primarily by the beta subunits. In Frankia alni (strain DSM 45986 / CECT 9034 / ACN14a), this protein is ATP synthase subunit beta.